The sequence spans 32 residues: Photosystem II reaction center protein Z (32 aa).

Residues 9–31 (FILIGSASWAALVLLVGSLNSFV) form a helical membrane-spanning segment.

It belongs to the PsbZ family. In terms of assembly, PSII is composed of 1 copy each of membrane proteins PsbA, PsbB, PsbC, PsbD, PsbE, PsbF, PsbH, PsbI, PsbJ, PsbK, PsbL, PsbM, PsbT, PsbY, PsbZ, Psb30/Ycf12, at least 3 peripheral proteins of the oxygen-evolving complex and a large number of cofactors. It forms dimeric complexes.

It is found in the plastid. The protein resides in the chloroplast thylakoid membrane. Its function is as follows. May control the interaction of photosystem II (PSII) cores with the light-harvesting antenna, regulates electron flow through the 2 photosystem reaction centers. PSII is a light-driven water plastoquinone oxidoreductase, using light energy to abstract electrons from H(2)O, generating a proton gradient subsequently used for ATP formation. This chain is Photosystem II reaction center protein Z, found in Euglena viridis (Cercaria viridis).